We begin with the raw amino-acid sequence, 114 residues long: Large ribosomal subunit protein bL20 (114 aa).

The protein belongs to the bacterial ribosomal protein bL20 family.

Functionally, binds directly to 23S ribosomal RNA and is necessary for the in vitro assembly process of the 50S ribosomal subunit. It is not involved in the protein synthesizing functions of that subunit. The protein is Large ribosomal subunit protein bL20 of Anaeromyxobacter dehalogenans (strain 2CP-C).